The sequence spans 390 residues: ATP phosphoribosyltransferase regulatory subunit (390 aa).

This sequence belongs to the class-II aminoacyl-tRNA synthetase family. HisZ subfamily. As to quaternary structure, heteromultimer composed of HisG and HisZ subunits.

Its subcellular location is the cytoplasm. It functions in the pathway amino-acid biosynthesis; L-histidine biosynthesis; L-histidine from 5-phospho-alpha-D-ribose 1-diphosphate: step 1/9. Its function is as follows. Required for the first step of histidine biosynthesis. May allow the feedback regulation of ATP phosphoribosyltransferase activity by histidine. This Bacillus velezensis (strain DSM 23117 / BGSC 10A6 / LMG 26770 / FZB42) (Bacillus amyloliquefaciens subsp. plantarum) protein is ATP phosphoribosyltransferase regulatory subunit.